Reading from the N-terminus, the 422-residue chain is Beta-1,3-galactosyltransferase 2 (422 aa).

The Cytoplasmic segment spans residues 1 to 24; that stretch reads MLQWRRRHCCFAKMTWNAKRSLFR. Residues 25–45 form a helical; Signal-anchor for type II membrane protein membrane-spanning segment; the sequence is THLIGVLSLVFLFAMFLFFNH. Residues 46 to 422 lie on the Lumenal side of the membrane; sequence HDWLPGRAGF…AGRYRHRKLH (377 aa). Asn75, Asn100, Asn119, Asn176, and Asn226 each carry an N-linked (GlcNAc...) asparagine glycan. The disordered stretch occupies residues 90–110; it reads TLRPQTATNSNNTDLSPQGVT.

It belongs to the glycosyltransferase 31 family. It depends on Mn(2+) as a cofactor.

It is found in the golgi apparatus membrane. It catalyses the reaction an N-acetyl-beta-D-glucosaminyl derivative + UDP-alpha-D-galactose = a beta-D-galactosyl-(1-&gt;3)-N-acetyl-beta-D-glucosaminyl derivative + UDP + H(+). The enzyme catalyses a beta-D-GlcNAc-(1-&gt;3)-beta-D-Gal-(1-&gt;4)-beta-D-Glc-(1&lt;-&gt;1)-Cer(d18:1(4E)) + UDP-alpha-D-galactose = a beta-D-Gal-(1-&gt;3)-beta-D-GlcNAc-(1-&gt;3)-beta-D-Gal-(1-&gt;4)-beta-D-Glc-(1&lt;-&gt;1')-Cer(d18:1(4E)) + UDP + H(+). The catalysed reaction is a neolactoside IV(3)-beta-GlcNAc-nLc4Cer(d18:1(4E)) + UDP-alpha-D-galactose = a neolactoside IV(3)-beta-[Gal-beta-(1-&gt;3)-GlcNAc]-nLc4Cer(d18:1(4E)) + UDP + H(+). The protein operates within protein modification; protein glycosylation. In terms of biological role, beta-1,3-galactosyltransferase that transfers galactose from UDP-galactose to substrates with a terminal beta-N-acetylglucosamine (beta-GlcNAc) residue. Can also utilize substrates with a terminal galactose residue, albeit with lower efficiency. Involved in the biosynthesis of the carbohydrate moieties of glycolipids and glycoproteins. Inactive towards substrates with terminal alpha-N-acetylglucosamine (alpha-GlcNAc) or alpha-N-acetylgalactosamine (alpha-GalNAc) residues. The protein is Beta-1,3-galactosyltransferase 2 (B3GALT2) of Pongo abelii (Sumatran orangutan).